The sequence spans 416 residues: Serine/threonine transporter SstT (416 aa).

Transmembrane regions (helical) follow at residues 15-35 (SLVSQILVGLVFGILLAMFMP), 49-69 (VGALKAVAPLLVFVLVMAAII), 82-102 (ILLLYLLGTFLAAAVAVVASF), 141-161 (ALMDANYIGILAWAIGLGIAM), 192-212 (LGILGLVASTLAETGFDALFG), 217-237 (LVVLIGCMLFIAFVVNPIIVF), 288-308 (VSIPLGATINMAGAAITITVL), 330-350 (VVATISACGASGVAGGSLLLI), and 356-376 (LFGIGNDIAMQVVAVGFIIGV).

This sequence belongs to the dicarboxylate/amino acid:cation symporter (DAACS) (TC 2.A.23) family.

It localises to the cell inner membrane. The enzyme catalyses L-serine(in) + Na(+)(in) = L-serine(out) + Na(+)(out). It carries out the reaction L-threonine(in) + Na(+)(in) = L-threonine(out) + Na(+)(out). Involved in the import of serine and threonine into the cell, with the concomitant import of sodium (symport system). In Aeromonas salmonicida (strain A449), this protein is Serine/threonine transporter SstT.